The chain runs to 636 residues: Protein meg-1 (636 aa).

Composition is skewed to polar residues over residues 1 to 13 (MDNR…NGNF), 38 to 54 (SSGN…NQQQ), and 292 to 355 (LSMN…QYNH). Disordered stretches follow at residues 1–54 (MDNR…NQQQ), 289–367 (LFNL…APHL), 484–504 (SDVA…SMYI), and 521–542 (LDSS…KTPS). Residue Ser574 is modified to Phosphoserine; by mbk-2. Positions 591 to 636 (MSQSFLHQQDDEAPDCTKNVHSESDLKQAEPQESDKQSDKELPSNE) are disordered. A compositionally biased stretch (basic and acidic residues) spans 608–636 (KNVHSESDLKQAEPQESDKQSDKELPSNE).

In terms of assembly, interacts with pptr-1, pptr-2 and pgl-1. Post-translationally, phosphorylated by mbk-2, which promotes the disassembly of zygotic P granules in the anterior cytoplasm of pre-gastrulation embryos. Dephosphorylated by a phosphatase complex containing the PP2A regulatory subunit pptr-1, which promotes the assembly and accumulation of zygotic P granules in the posterior cytoplasm of pre-gastrulation embryos. Not expressed in the adult germline or in any somatic tissues.

It is found in the cytoplasmic granule. In terms of biological role, p granule component, which acts redundantly with P granule component meg-2 to promote P granule segregation during embryogenesis, and germ cell proliferation and differentiation in larval stages. In its phosphorylated form, and together with meg-2, promotes the disassembly of zygotic P granules in the anterior cytoplasm of pre-gastrulation embryos. In its dephosphorylated form, and together with meg-2, promotes the assembly and accumulation of zygotic P granules in the posterior cytoplasm of pre-gastrulation embryos. May function with the nanos family members nos-2 and nos-3 to promote germ cell proliferation during larval development. Required for fertility. The polypeptide is Protein meg-1 (Caenorhabditis elegans).